The chain runs to 348 residues: Protein RecA (348 aa).

64–71 (GPESSGKT) is a binding site for ATP. Basic and acidic residues predominate over residues 325 to 335 (YEIDGASKEPL). The disordered stretch occupies residues 325 to 348 (YEIDGASKEPLEETEETLSLLDDE). A compositionally biased stretch (acidic residues) spans 336-348 (EETEETLSLLDDE).

It belongs to the RecA family.

Its subcellular location is the cytoplasm. Can catalyze the hydrolysis of ATP in the presence of single-stranded DNA, the ATP-dependent uptake of single-stranded DNA by duplex DNA, and the ATP-dependent hybridization of homologous single-stranded DNAs. It interacts with LexA causing its activation and leading to its autocatalytic cleavage. This is Protein RecA from Listeria seeligeri.